A 485-amino-acid chain; its full sequence is MSGGFELQPQDGGPRVALAPGETVIGRGPLLGLHRNPCYYQSSEKSQLLPLKTNIWCWLNPGDHFSLLVDKYIFCVLSTHSEMEMECTLRNSQMLDEDDILNEIPKSSSADLPDKTPSAPRRERSTETAKPQAAANNMSFIGESRDLSKQQPNPSERKRILPAWMLTENSSDQNLSVISGGNNVTWESEKERVCKDKTQVNITQPGKKRLISSGSSESTSAKQDTGKKCKNDDQEESIISSKEMPQSFSAAMLHNTEIDNTKTNPQRSKVPVEALGKVSEHKIITKGSSNEDSTARSCSESYSSTQSKSFCDKPQKSHPEPSSNPPSPECVQAKATDSVPNGSEENKVQRTSCMYGANCYRKNPVHFQHFSHPGDSDYGGVNITCQDEADDRPECPYGASCYRKNPQHKIEYRHSTFPVRSISDEDDNVGQPNEYNLNDSFIDDEEEEYEPTDEDSDWEPEKEDLEKEDMEGLLKEAKKFMKRKK.

The FHA-like domain occupies 1–84 (MSGGFELQPQ…CVLSTHSEME (84 aa)). A Phosphoserine; by ATM modification is found at Ser92. Positions 103 to 156 (EIPKSSSADLPDKTPSAPRRERSTETAKPQAAANNMSFIGESRDLSKQQPNPSE) are disordered. Ser125 carries the phosphoserine modification. Positions 157–166 (RKRILPAWML) match the KBM motif. A disordered region spans residues 206–348 (GKKRLISSGS…VPNGSEENKV (143 aa)). Polar residues-rich tracts occupy residues 212–223 (SSGSSESTSAKQ), 237–249 (SIISSKEMPQSFS), and 286–309 (KGSSNEDSTARSCSESYSSTQSKS). Positions 310-319 (FCDKPQKSHP) are enriched in basic and acidic residues. 4 residues coordinate a glycoprotein: Arg350, Tyr355, Tyr360, and Arg361. The PBZ-type 1 zinc finger occupies 351 to 372 (TSCMYGANCYRKNPVHFQHFSH). The segment at 380–390 (GVNITCQDEAD) is flexible linker. Residues 393–414 (PECPYGASCYRKNPQHKIEYRH) form a PBZ-type 2 zinc finger. Tyr397, Tyr402, and Arg403 together coordinate a glycoprotein. The disordered stretch occupies residues 420 to 470 (RSISDEDDNVGQPNEYNLNDSFIDDEEEEYEPTDEDSDWEPEKEDLEKEDM). Positions 441 to 469 (FIDDEEEEYEPTDEDSDWEPEKEDLEKED) are enriched in acidic residues. The NAP1L motif signature appears at 449 to 473 (YEPTDEDSDWEPEKEDLEKEDMEGL).

It belongs to the APLF family. In terms of assembly, interacts with LIG4. Interacts with PARP1. Interacts with XRCC4. Interacts (via KBM motif) with XRCC5 and XRCC6; promoting recruitment to DNA damage sites. Interacts with XRCC1. Interacts (via C-terminal disordered region) with histones; interacts with histone H2A, H2B and H3-H4. Post-translationally, poly-ADP-ribosylated. In addition to binding non covalently poly-ADP-ribose via its PBZ-type zinc fingers, the protein is also covalently poly-ADP-ribosylated by PARP1. In terms of processing, phosphorylated in an ATM-dependent manner upon double-strand DNA break.

It is found in the nucleus. The protein localises to the chromosome. It localises to the cytoplasm. The protein resides in the cytosol. Functionally, histone chaperone involved in single-strand and double-strand DNA break repair. Recruited to sites of DNA damage through interaction with branched poly-ADP-ribose chains, a polymeric post-translational modification synthesized transiently at sites of chromosomal damage to accelerate DNA strand break repair reactions. Following recruitment to DNA damage sites, acts as a histone chaperone that mediates histone eviction during DNA repair and promotes recruitment of histone variant MACROH2A1. Also has a nuclease activity: displays apurinic-apyrimidinic (AP) endonuclease and 3'-5' exonuclease activities in vitro. Also able to introduce nicks at hydroxyuracil and other types of pyrimidine base damage. Together with PARP3, promotes the retention of the LIG4-XRCC4 complex on chromatin and accelerate DNA ligation during non-homologous end-joining (NHEJ). Also acts as a negative regulator of cell pluripotency by promoting histone exchange. Required for the embryo implantation during the epithelial to mesenchymal transition in females. The sequence is that of Aprataxin and PNK-like factor (APLF) from Bos taurus (Bovine).